We begin with the raw amino-acid sequence, 58 residues long: Pepsin-1 (58 aa).

A propeptide spans 1–41 (LLQVPLEKGQSAREYLQEQGLWEQYRLKYPYNPMAKFDPSF) (activation peptide).

Belongs to the peptidase A1 family.

The sequence is that of Pepsin-1 from Thunnus orientalis (North Pacific bluefin tuna).